The chain runs to 506 residues: Galactose/methyl galactoside import ATP-binding protein MglA (506 aa).

ABC transporter domains lie at Leu14–Glu249 and Val264–Leu506. Gly46–Ser53 serves as a coordination point for ATP.

This sequence belongs to the ABC transporter superfamily. Galactose/methyl galactoside importer (TC 3.A.1.2.3) family. The complex is composed of one ATP-binding protein (MglA), two transmembrane proteins (MglC) and a solute-binding protein (MglB).

Its subcellular location is the cell inner membrane. The catalysed reaction is D-galactose(out) + ATP + H2O = D-galactose(in) + ADP + phosphate + H(+). It carries out the reaction methyl beta-D-galactoside(out) + ATP + H2O = methyl beta-D-galactoside(in) + ADP + phosphate + H(+). Part of the ABC transporter complex MglABC involved in galactose/methyl galactoside import. Responsible for energy coupling to the transport system. This chain is Galactose/methyl galactoside import ATP-binding protein MglA, found in Mannheimia succiniciproducens (strain KCTC 0769BP / MBEL55E).